The following is a 163-amino-acid chain: ATP synthase subunit b (163 aa).

Residues 10–29 (ALYQLLAFSVLLFFLSKFAL) form a helical membrane-spanning segment.

Belongs to the ATPase B chain family. F-type ATPases have 2 components, F(1) - the catalytic core - and F(0) - the membrane proton channel. F(1) has five subunits: alpha(3), beta(3), gamma(1), delta(1), epsilon(1). F(0) has three main subunits: a(1), b(2) and c(10-14). The alpha and beta chains form an alternating ring which encloses part of the gamma chain. F(1) is attached to F(0) by a central stalk formed by the gamma and epsilon chains, while a peripheral stalk is formed by the delta and b chains.

It is found in the cell membrane. F(1)F(0) ATP synthase produces ATP from ADP in the presence of a proton or sodium gradient. F-type ATPases consist of two structural domains, F(1) containing the extramembraneous catalytic core and F(0) containing the membrane proton channel, linked together by a central stalk and a peripheral stalk. During catalysis, ATP synthesis in the catalytic domain of F(1) is coupled via a rotary mechanism of the central stalk subunits to proton translocation. In terms of biological role, component of the F(0) channel, it forms part of the peripheral stalk, linking F(1) to F(0). The sequence is that of ATP synthase subunit b from Alkalihalophilus pseudofirmus (strain ATCC BAA-2126 / JCM 17055 / OF4) (Bacillus pseudofirmus).